Here is a 100-residue protein sequence, read N- to C-terminus: uncharacterized protein (100 aa).

This is an uncharacterized protein from Caenorhabditis elegans.